The sequence spans 406 residues: MSAPHAQVERADFDRYMVPNYAPAAFIPVRGEGSRVWDQSGRELIDFAGGIAVTSLGHAHPALVKALTEQAQRIWHVSNVFTNEPALRLARKLVDATFAERVFLANSGAEANEAAFKLARRYANDVYGPQKYEIIAASNSFHGRTLFTVNVGGQPKYSDGFGPKFEGITHVPYNDLEALKAAISDKTCAVVLEPIQGEGGVLPAQQAYLEGARKLCDEHNALLVFDEVQSGMGRVGELFAYMHYGVVPDILSSAKSLGGGFPIGAMLTTGEIAKHLSVGTHGTTYGGNPLASAVAEAALDVINTPEVLDGVKAKHERFKSRLQKIGQEYGIFDEIRGMGLLIGAALTDEWKGKARDVLNAAEKEAVMVLQASPDVVRFAPSLVIDDAEIDEGLERFERAVAKLVRG.

Pyridoxal 5'-phosphate-binding positions include 108-109 (GA) and Phe-141. Arg-144 provides a ligand contact to N(2)-acetyl-L-ornithine. 226–229 (DEVQ) is a binding site for pyridoxal 5'-phosphate. Residue Lys-255 is modified to N6-(pyridoxal phosphate)lysine. Thr-283 serves as a coordination point for N(2)-acetyl-L-ornithine. Thr-284 serves as a coordination point for pyridoxal 5'-phosphate.

It belongs to the class-III pyridoxal-phosphate-dependent aminotransferase family. ArgD subfamily. As to quaternary structure, homodimer. Pyridoxal 5'-phosphate serves as cofactor.

Its subcellular location is the cytoplasm. The enzyme catalyses N(2)-succinyl-L-ornithine + 2-oxoglutarate = N-succinyl-L-glutamate 5-semialdehyde + L-glutamate. It carries out the reaction N(2)-acetyl-L-ornithine + 2-oxoglutarate = N-acetyl-L-glutamate 5-semialdehyde + L-glutamate. It participates in amino-acid biosynthesis; L-arginine biosynthesis; N(2)-acetyl-L-ornithine from L-glutamate: step 4/4. The protein operates within amino-acid degradation; L-arginine degradation via AST pathway; L-glutamate and succinate from L-arginine: step 3/5. In terms of biological role, transaminates both N(2)-acetylornithine and N(2)-succinylornithine. The chain is Succinylornithine transaminase/acetylornithine aminotransferase (aruC) from Pseudomonas aeruginosa (strain ATCC 15692 / DSM 22644 / CIP 104116 / JCM 14847 / LMG 12228 / 1C / PRS 101 / PAO1).